The primary structure comprises 419 residues: MDALINLKDCKEYMTITINGNEHQIKLAGIIEDPYFCGKDVCTILGYKDKEQALRKRVKSKHKKSLSELFEKKLPVVTTGNFFLGTQNELSYHEGKSIYINEPGLYNLIMSSEAPFAEQFQDMVYEKILPSIRKYGSYSIEQKLSSAMEQLALKDKSEEELQIKLQEERIEKENAYMKLRSEAKRHKEQIKRTLEFNQATKQIEPLEYIYICTTEYYQQHHKFKVGGVQSFKDLKSRLTQYNSGESNSEAHFFIYVRKTVSYRSIEHIIKGLLSGFRENQSNELYIMHCDWLVKFLDAIMDGNAEFALLVNSNREQIALDTINKEPTILPPIKLEQIAYIRAGDEPRDLSSVLGQEMIDSIKEAIESFEPMDNTVKRKEFELHLLSKSPNVSLTGKRRDTWELTRQLGSSINPMWRYKY.

The 133-residue stretch at 4 to 136 (LINLKDCKEY…KILPSIRKYG (133 aa)) folds into the Bro-N domain. Residues 150–195 (QLALKDKSEEELQIKLQEERIEKENAYMKLRSEAKRHKEQIKRTLE) are a coiled coil.

Belongs to the IIV-6 201R/289L family.

This is Putative Bro-N domain-containing protein 201R from Acheta domesticus (House cricket).